Reading from the N-terminus, the 150-residue chain is Ribonuclease H (150 aa).

Positions 1–141 (MKFIEVHTDG…VDVLARNQAI (141 aa)) constitute an RNase H type-1 domain. Aspartate 9, glutamate 47, aspartate 69, and aspartate 133 together coordinate Mg(2+).

The protein belongs to the RNase H family. Monomer. Mg(2+) serves as cofactor.

The protein resides in the cytoplasm. The catalysed reaction is Endonucleolytic cleavage to 5'-phosphomonoester.. Its function is as follows. Endonuclease that specifically degrades the RNA of RNA-DNA hybrids. This Xanthomonas euvesicatoria pv. vesicatoria (strain 85-10) (Xanthomonas campestris pv. vesicatoria) protein is Ribonuclease H.